The sequence spans 444 residues: Protein EMP46 (444 aa).

An N-terminal signal peptide occupies residues 1 to 46 (MTTRKTASSLQLLGKITGTKAGTKQKKMNFINGLIWLYMCVWMVHG). The Lumenal segment spans residues 47-408 (KVTQKDELKW…YGKQTKGHDE (362 aa)). Residues 52-269 (DELKWNKGYS…EILKMKLYDG (218 aa)) form the L-type lectin-like domain. Tyr-177 contributes to the K(+) binding site. Cys-196 and Cys-230 are oxidised to a cystine. A helical transmembrane segment spans residues 409 to 429 (IFSKISVWLALLIFIMITLAY). The mediates the interactions with COPI and COPII coat complexes stretch occupies residues 429–432 (YYMF). Topologically, residues 430-444 (YMFRINQDIKKVKLL) are cytoplasmic. The Di-lysine motif motif lies at 440 to 444 (KVKLL).

The protein belongs to the EMP46/EMP47 family. As to quaternary structure, interacts with EMP47 in the endoplasmic reticulum membrane in order to be transported to the Golgi apparatus. Interacts with the coatomer proteins COP1, SEC21 and SEC23.

It is found in the golgi apparatus membrane. The protein localises to the endoplasmic reticulum membrane. Its function is as follows. Involved in the secretion of glycoproteins and in nucleus architecture and gene silencing. This Saccharomyces cerevisiae (strain ATCC 204508 / S288c) (Baker's yeast) protein is Protein EMP46 (EMP46).